The following is a 321-amino-acid chain: Polyprenyl transferase cle5 (321 aa).

Helical transmembrane passes span 26 to 46 (PLLATFSGVWATILAGSHKIT), 57 to 77 (VLSQALLCFICSFVFCGAGMV), 107 to 127 (EALVWMAFQFISSWVLVSWML), 132 to 149 (VQAAMLPVTLSTILYPFA), 159 to 179 (IYPQYLLGFTLAYPSLIGTLA), 189 to 209 (LWASINQSLPMFVTVFTWTLY), 232 to 252 (VLAGSYIHHLLVVLAVLVLGA), 262 to 282 (SQWLWGGWMGVWTWSFLGQLV), and 300 to 320 (FALGVWTVFVCVVELLIGGNG).

The protein belongs to the UbiA prenyltransferase family. Mg(2+) serves as cofactor.

Its subcellular location is the membrane. The protein operates within secondary metabolite biosynthesis; terpenoid biosynthesis. Its function is as follows. Polyprenyl transferase; part of the cluster A that mediates the biosynthesis of chevalone E and its oxidized derivatives that possess a unique five-membered lactone ring and can synergistically enhance the cytotoxicity of doxorubicin (DOX) in breast cancer cells. Within the pathway, cle5 takes part to the biosynthesis of the molecular scaffold by catalyzing the C-3 geranylgeranylation reaction of triacetic acid lactone (TAL) produced by cle1. The molecular scaffold is commonly biosynthesized by a series of enzymes including the non-reducing polyketide synthase (NR-PKS) cle1 that produces the alpha-pyrone triacetic acid lactone (TAL); The membrane-bound prenyltransferase cle5 that accepts TAL as its substrate to perform a C-3 geranylgeranylation reaction, in which the pathway-dedicated GGPS cle6 is required to provide GGPP, the other substrate of cle5; the FAD-dependent monooxygenase Cle3 that forms an (S)-epoxide ring at the terminal olefin of the geranylgeranyl group; and the terpene cyclase Cle7 that catalyzes the cyclization of the prenyl group that yields the pentacyclic pathway intermediate chevalone E. Chevalone E can derivatize into seven new oxidized analogs by the cytochrome P450 monooxygenases cle2 (acting at C-20) and cle4 (acting at C-11 and C-12). The polypeptide is Polyprenyl transferase cle5 (Aspergillus versicolor).